Consider the following 614-residue polypeptide: Asparagine synthetase [glutamine-hydrolyzing] 3 (614 aa).

The active-site For GATase activity is the Cys-2. The Glutamine amidotransferase type-2 domain occupies Cys-2–Asp-216. L-glutamine-binding positions include Arg-50–Val-54, Asn-77–Glu-79, and Asp-102. Residue Ser-377–Gly-378 coordinates ATP.

This sequence belongs to the asparagine synthetase family.

The enzyme catalyses L-aspartate + L-glutamine + ATP + H2O = L-asparagine + L-glutamate + AMP + diphosphate + H(+). Its pathway is amino-acid biosynthesis; L-asparagine biosynthesis; L-asparagine from L-aspartate (L-Gln route): step 1/1. In terms of biological role, asparagine synthetase involved in sporulation. This is Asparagine synthetase [glutamine-hydrolyzing] 3 (asnO) from Bacillus subtilis (strain 168).